The sequence spans 189 residues: Glutathione-dependent formaldehyde-activating enzyme (189 aa).

The region spanning Phe-20–Asp-166 is the CENP-V/GFA domain. Residues Cys-27, Cys-29, Cys-48, Cys-50, Cys-53, Cys-95, and Cys-98 each coordinate Zn(2+).

Belongs to the Gfa family. It depends on Zn(2+) as a cofactor.

The catalysed reaction is S-(hydroxymethyl)glutathione = glutathione + formaldehyde. The protein operates within one-carbon metabolism; formaldehyde degradation; formate from formaldehyde (glutathione route): step 1/3. Functionally, catalyzes the condensation of formaldehyde and glutathione to S-hydroxymethylglutathione. The polypeptide is Glutathione-dependent formaldehyde-activating enzyme (Mesorhizobium japonicum (strain LMG 29417 / CECT 9101 / MAFF 303099) (Mesorhizobium loti (strain MAFF 303099))).